A 183-amino-acid chain; its full sequence is ATP synthase subunit delta, chloroplastic (183 aa).

Belongs to the ATPase delta chain family. As to quaternary structure, F-type ATPases have 2 components, F(1) - the catalytic core - and F(0) - the membrane proton channel. F(1) has five subunits: alpha(3), beta(3), gamma(1), delta(1), epsilon(1). CF(0) has four main subunits: a(1), b(1), b'(1) and c(10-14). The alpha and beta chains form an alternating ring which encloses part of the gamma chain. F(1) is attached to F(0) by a central stalk formed by the gamma and epsilon chains, while a peripheral stalk is formed by the delta, b and b' chains.

The protein resides in the plastid. It localises to the chloroplast thylakoid membrane. In terms of biological role, f(1)F(0) ATP synthase produces ATP from ADP in the presence of a proton or sodium gradient. F-type ATPases consist of two structural domains, F(1) containing the extramembraneous catalytic core and F(0) containing the membrane proton channel, linked together by a central stalk and a peripheral stalk. During catalysis, ATP synthesis in the catalytic domain of F(1) is coupled via a rotary mechanism of the central stalk subunits to proton translocation. This protein is part of the stalk that links CF(0) to CF(1). It either transmits conformational changes from CF(0) to CF(1) or is implicated in proton conduction. This chain is ATP synthase subunit delta, chloroplastic, found in Cyanidium caldarium (Red alga).